A 732-amino-acid polypeptide reads, in one-letter code: Elongation factor 2 (732 aa).

Residues 19-260 (ERIRNIGIAA…MVVRHLPSPI (242 aa)) enclose the tr-type G domain. GTP-binding positions include 28-35 (AHIDHGKT), 94-98 (DTPGH), and 148-151 (NKVD). Histidine 597 carries the diphthamide modification.

This sequence belongs to the TRAFAC class translation factor GTPase superfamily. Classic translation factor GTPase family. EF-G/EF-2 subfamily.

The protein resides in the cytoplasm. Functionally, catalyzes the GTP-dependent ribosomal translocation step during translation elongation. During this step, the ribosome changes from the pre-translocational (PRE) to the post-translocational (POST) state as the newly formed A-site-bound peptidyl-tRNA and P-site-bound deacylated tRNA move to the P and E sites, respectively. Catalyzes the coordinated movement of the two tRNA molecules, the mRNA and conformational changes in the ribosome. This Pyrococcus furiosus (strain ATCC 43587 / DSM 3638 / JCM 8422 / Vc1) protein is Elongation factor 2 (fusA).